Reading from the N-terminus, the 266-residue chain is Zinc finger protein CG30 (266 aa).

Residues 8 to 63 (CNICFSVAEIKNYFMQPIDRLTMIPVLELDTCKHQLCSMCIRKIRKRKKTPCPLCR) form an RING-type zinc finger.

The protein localises to the host nucleus. Plays a role in the proper expression of late and very late genes. This is Zinc finger protein CG30 (CG30) from Bombyx mori nuclear polyhedrosis virus (BmNPV).